A 260-amino-acid polypeptide reads, in one-letter code: Cytochrome c oxidase subunit 3 (260 aa).

Topologically, residues 1–15 are mitochondrial matrix; the sequence is MAHQAHAYHMVDPSP. A helical transmembrane segment spans residues 16–34; it reads WPLTGAVAALLLTSGLAMW. Topologically, residues 35 to 40 are mitochondrial intermembrane; it reads FHFGSM. A helical membrane pass occupies residues 41-66; the sequence is ILLTLGLITMVLTMIQWWRDVIREGT. Over 67 to 72 the chain is Mitochondrial matrix; it reads FQGHHT. Residues 73 to 105 form a helical membrane-spanning segment; sequence PPVQKGLRYGMILFITSEVFFFIGFFWAFYNSS. At 106 to 128 the chain is on the mitochondrial intermembrane side; it reads LAPTYELGECWPPTGITPLNPFE. A helical membrane pass occupies residues 129-152; sequence VPLLNTAVLLASGVTVTWAHHSIM. Residues 153–155 lie on the Mitochondrial matrix side of the membrane; the sequence is HGD. A helical membrane pass occupies residues 156–183; the sequence is RKEAIQSLTLTILLGLYFTALQAMEYYE. Over 184–190 the chain is Mitochondrial intermembrane; the sequence is APFTIAD. Residues 191–223 form a helical membrane-spanning segment; it reads GVYGSTFFVATGFHGLHVIIGSLFLSVCLLRQI. At 224 to 232 the chain is on the mitochondrial matrix side; sequence QYHFTSKHH. Residues 233 to 255 traverse the membrane as a helical segment; it reads FGFEAAWYWHFVDVVWLFLYVSI. The Mitochondrial intermembrane portion of the chain corresponds to 256–260; the sequence is YWWGS.

It belongs to the cytochrome c oxidase subunit 3 family. Component of the cytochrome c oxidase (complex IV, CIV), a multisubunit enzyme composed of 14 subunits. The complex is composed of a catalytic core of 3 subunits MT-CO1, MT-CO2 and MT-CO3, encoded in the mitochondrial DNA, and 11 supernumerary subunits COX4I, COX5A, COX5B, COX6A, COX6B, COX6C, COX7A, COX7B, COX7C, COX8 and NDUFA4, which are encoded in the nuclear genome. The complex exists as a monomer or a dimer and forms supercomplexes (SCs) in the inner mitochondrial membrane with NADH-ubiquinone oxidoreductase (complex I, CI) and ubiquinol-cytochrome c oxidoreductase (cytochrome b-c1 complex, complex III, CIII), resulting in different assemblies (supercomplex SCI(1)III(2)IV(1) and megacomplex MCI(2)III(2)IV(2)).

It localises to the mitochondrion inner membrane. It catalyses the reaction 4 Fe(II)-[cytochrome c] + O2 + 8 H(+)(in) = 4 Fe(III)-[cytochrome c] + 2 H2O + 4 H(+)(out). Component of the cytochrome c oxidase, the last enzyme in the mitochondrial electron transport chain which drives oxidative phosphorylation. The respiratory chain contains 3 multisubunit complexes succinate dehydrogenase (complex II, CII), ubiquinol-cytochrome c oxidoreductase (cytochrome b-c1 complex, complex III, CIII) and cytochrome c oxidase (complex IV, CIV), that cooperate to transfer electrons derived from NADH and succinate to molecular oxygen, creating an electrochemical gradient over the inner membrane that drives transmembrane transport and the ATP synthase. Cytochrome c oxidase is the component of the respiratory chain that catalyzes the reduction of oxygen to water. Electrons originating from reduced cytochrome c in the intermembrane space (IMS) are transferred via the dinuclear copper A center (CU(A)) of subunit 2 and heme A of subunit 1 to the active site in subunit 1, a binuclear center (BNC) formed by heme A3 and copper B (CU(B)). The BNC reduces molecular oxygen to 2 water molecules using 4 electrons from cytochrome c in the IMS and 4 protons from the mitochondrial matrix. The chain is Cytochrome c oxidase subunit 3 (mt-co3) from Xenopus laevis (African clawed frog).